A 258-amino-acid chain; its full sequence is 3-deoxy-manno-octulosonate cytidylyltransferase (258 aa).

The protein belongs to the KdsB family.

Its subcellular location is the cytoplasm. The enzyme catalyses 3-deoxy-alpha-D-manno-oct-2-ulosonate + CTP = CMP-3-deoxy-beta-D-manno-octulosonate + diphosphate. The protein operates within nucleotide-sugar biosynthesis; CMP-3-deoxy-D-manno-octulosonate biosynthesis; CMP-3-deoxy-D-manno-octulosonate from 3-deoxy-D-manno-octulosonate and CTP: step 1/1. It functions in the pathway bacterial outer membrane biogenesis; lipopolysaccharide biosynthesis. Functionally, activates KDO (a required 8-carbon sugar) for incorporation into bacterial lipopolysaccharide in Gram-negative bacteria. The protein is 3-deoxy-manno-octulosonate cytidylyltransferase of Blochmanniella floridana.